A 200-amino-acid chain; its full sequence is uncharacterized protein (200 aa).

A disordered region spans residues 1–21 (MSNSAQRDARNSRDESARASD). Residues 7-21 (RDARNSRDESARASD) show a composition bias toward basic and acidic residues.

This is an uncharacterized protein from Mycobacterium tuberculosis (strain CDC 1551 / Oshkosh).